Consider the following 423-residue polypeptide: Citrate synthase-like protein clz17 (423 aa).

Catalysis depends on residues H357 and D413.

The protein belongs to the citrate synthase family.

It functions in the pathway secondary metabolite biosynthesis. Citrate synthase-like protein; part of the gene cluster that mediates the biosynthesis of squalestatin S1 (SQS1, also known as zaragozic acid A), a heavily oxidized fungal polyketide that offers potent cholesterol lowering activity by targeting squalene synthase (SS). SQS1 is composed of a 2,8-dioxobicyclic[3.2.1]octane-3,4,5-tricarboxyclic acid core that is connected to two lipophilic polyketide arms. These initial steps feature the priming of an unusual benzoic acid starter unit onto the highly reducing polyketide synthase clz14, followed by oxaloacetate extension and product release to generate a tricarboxylic acid containing product. The phenylalanine ammonia lyase (PAL) clz10 and the acyl-CoA ligase clz12 are involved in transforming phenylalanine into benzoyl-CoA. The citrate synthase-like protein clz17 is involved in connecting the C-alpha-carbons of the hexaketide chain and oxaloacetate to afford the tricarboxylic acid unit. The potential hydrolytic enzymes, clz11 and clz13, are in close proximity to pks2 and may participate in product release. On the other side, the tetraketide arm is synthesized by a the squalestatin tetraketide synthase clz2 and enzymatically esterified to the core in the last biosynthetic step, by the acetyltransferase clz6. The biosynthesis of the tetraketide must involve 3 rounds of chain extension. After the first and second rounds methyl-transfer occurs, and in all rounds of extension the ketoreductase and dehydratase are active. The enoyl reductase and C-MeT of clz2 are not active in the final round of extension. The acetyltransferase clz6 appears to have a broad substrate selectivity for its acyl CoA substrate, allowing the in vitro synthesis of novel squalestatins. The biosynthesis of SQS1 requires several oxidative steps likely performed by oxidoreductases clz3, clz15 and clz16. Finally, in support of the identification of the cluster as being responsible for SQS1 production, the cluster contains a gene encoding a putative squalene synthase (SS) clz20, suggesting a likely mechanism for self-resistance. The protein is Citrate synthase-like protein clz17 of Cochliobolus lunatus (Filamentous fungus).